The primary structure comprises 224 residues: Glutathione S-transferase U8 (224 aa).

The GST N-terminal domain maps to 5–85 (EHVKLLGLWG…YIEDTWKTTH (81 aa)). Glutathione-binding positions include 15–16 (SP), 42–43 (NR), 56–57 (KV), and 69–70 (ES). The GST C-terminal domain maps to 91–213 (DPYERAMARF…LPPKEKLVAV (123 aa)). Thr-152 carries the post-translational modification Phosphothreonine.

Belongs to the GST superfamily. Tau family.

Its subcellular location is the cytoplasm. The protein localises to the cytosol. It catalyses the reaction RX + glutathione = an S-substituted glutathione + a halide anion + H(+). May be involved in the conjugation of reduced glutathione to a wide number of exogenous and endogenous hydrophobic electrophiles and have a detoxification role against certain herbicides. The protein is Glutathione S-transferase U8 (GSTU8) of Arabidopsis thaliana (Mouse-ear cress).